A 275-amino-acid chain; its full sequence is Protein MGF 110-11L (275 aa).

Residues 5–25 traverse the membrane as a helical segment; it reads LGLLLGYSVLILTHELPDLSA. Asn-61 is a glycosylation site (N-linked (GlcNAc...) asparagine; by host). Helical transmembrane passes span 127–147 and 149–169; these read HCCF…FAYH and NLHL…IWLS.

This sequence belongs to the asfivirus MGF 110 family.

It is found in the host membrane. Plays a role in virus cell tropism, and may be required for efficient virus replication in macrophages. This African swine fever virus (isolate Pig/Kenya/KEN-50/1950) (ASFV) protein is Protein MGF 110-11L.